A 126-amino-acid chain; its full sequence is Glycine cleavage system H protein (126 aa).

The Lipoyl-binding domain occupies 24 to 105; it reads TLTVGITDHA…AYGVWLFKIK (82 aa). Position 65 is an N6-lipoyllysine (lysine 65).

This sequence belongs to the GcvH family. As to quaternary structure, the glycine cleavage system is composed of four proteins: P, T, L and H. Requires (R)-lipoate as cofactor.

The glycine cleavage system catalyzes the degradation of glycine. The H protein shuttles the methylamine group of glycine from the P protein to the T protein. The protein is Glycine cleavage system H protein of Burkholderia cenocepacia (strain ATCC BAA-245 / DSM 16553 / LMG 16656 / NCTC 13227 / J2315 / CF5610) (Burkholderia cepacia (strain J2315)).